The chain runs to 228 residues: UPF0173 metal-dependent hydrolase Tpen_1493 (228 aa).

This sequence belongs to the UPF0173 family.

The chain is UPF0173 metal-dependent hydrolase Tpen_1493 from Thermofilum pendens (strain DSM 2475 / Hrk 5).